Reading from the N-terminus, the 348-residue chain is D-fructose 1,6-bisphosphatase class 2/sedoheptulose 1,7-bisphosphatase 2 (348 aa).

Mn(2+) is bound by residues D33, E57, D97, and E100. Residues 100–102 (EGT), Y131, 176–178 (RER), and 198–200 (DGD) contribute to the substrate site. E225 is a Mn(2+) binding site.

Belongs to the FBPase class 2 family. Homotetramer.

It carries out the reaction beta-D-fructose 1,6-bisphosphate + H2O = beta-D-fructose 6-phosphate + phosphate. It catalyses the reaction D-sedoheptulose 1,7-bisphosphate + H2O = D-sedoheptulose 7-phosphate + phosphate. Its pathway is carbohydrate biosynthesis; Calvin cycle. In terms of biological role, catalyzes the hydrolysis of fructose 1,6-bisphosphate (Fru 1,6-P2) and sedoheptulose 1,7-bisphosphate (Sed 1,7-P2) to fructose 6-phosphate and sedoheptulose 7-phosphate, respectively. The protein is D-fructose 1,6-bisphosphatase class 2/sedoheptulose 1,7-bisphosphatase 2 of Acaryochloris marina (strain MBIC 11017).